A 413-amino-acid chain; its full sequence is Transposon Ty4-H Gag polyprotein (413 aa).

A coiled-coil region spans residues 39 to 115; that stretch reads RKVSIKDEQV…IQLLETNENN (77 aa). A disordered region spans residues 380–413; that stretch reads RQQQLKSSAKRTKVLEQDTKKVKQSVQQQKTGNY. The segment covering 403-413 has biased composition (low complexity); the sequence is QSVQQQKTGNY.

Functionally, capsid protein (CA) is the structural component of the virus-like particle (VLP), forming the shell that encapsulates the retrotransposons dimeric RNA genome. This is Transposon Ty4-H Gag polyprotein (TY4A-H) from Saccharomyces cerevisiae (strain ATCC 204508 / S288c) (Baker's yeast).